Here is a 222-residue protein sequence, read N- to C-terminus: Glutathione S-transferase alpha-2 (222 aa).

A GST N-terminal domain is found at 3–83 (GKPVLHYFNA…YIATKYDLYG (81 aa)). Position 4 is an N6-succinyllysine (Lys-4). Glutathione is bound by residues Tyr-9, Lys-45, 54-55 (QV), and 67-68 (QT). Residues 85-208 (DMKERALIDM…QPGSQRKPAM (124 aa)) enclose the GST C-terminal domain.

This sequence belongs to the GST superfamily. Alpha family. Homodimer or heterodimer of GSTA1 and GSTA2.

The protein resides in the cytoplasm. It catalyses the reaction RX + glutathione = an S-substituted glutathione + a halide anion + H(+). In terms of biological role, catalyzes the conjugation of glutathione to a large variety of electrophilic compounds. The sequence is that of Glutathione S-transferase alpha-2 (Gsta2) from Rattus norvegicus (Rat).